The primary structure comprises 135 residues: Large ribosomal subunit protein bL19 (135 aa).

The protein belongs to the bacterial ribosomal protein bL19 family.

Functionally, this protein is located at the 30S-50S ribosomal subunit interface and may play a role in the structure and function of the aminoacyl-tRNA binding site. This is Large ribosomal subunit protein bL19 from Xanthomonas axonopodis pv. citri (strain 306).